The chain runs to 417 residues: Serine hydroxymethyltransferase (417 aa).

Residues Leu121 and 125 to 127 each bind (6S)-5,6,7,8-tetrahydrofolate; that span reads GHL. At Lys229 the chain carries N6-(pyridoxal phosphate)lysine. 355 to 357 is a binding site for (6S)-5,6,7,8-tetrahydrofolate; that stretch reads SPF.

This sequence belongs to the SHMT family. In terms of assembly, homodimer. Requires pyridoxal 5'-phosphate as cofactor.

It is found in the cytoplasm. The enzyme catalyses (6R)-5,10-methylene-5,6,7,8-tetrahydrofolate + glycine + H2O = (6S)-5,6,7,8-tetrahydrofolate + L-serine. It functions in the pathway one-carbon metabolism; tetrahydrofolate interconversion. It participates in amino-acid biosynthesis; glycine biosynthesis; glycine from L-serine: step 1/1. Functionally, catalyzes the reversible interconversion of serine and glycine with tetrahydrofolate (THF) serving as the one-carbon carrier. This reaction serves as the major source of one-carbon groups required for the biosynthesis of purines, thymidylate, methionine, and other important biomolecules. Also exhibits THF-independent aldolase activity toward beta-hydroxyamino acids, producing glycine and aldehydes, via a retro-aldol mechanism. The chain is Serine hydroxymethyltransferase from Xanthomonas axonopodis pv. citri (strain 306).